The following is a 55-amino-acid chain: Large ribosomal subunit protein bL33A (55 aa).

It belongs to the bacterial ribosomal protein bL33 family.

This chain is Large ribosomal subunit protein bL33A, found in Rhodococcus jostii (strain RHA1).